A 1054-amino-acid polypeptide reads, in one-letter code: MRKTLPSIGALGFSNTNAEKDLCCLGWYSNDPDTVVDAPEQAAEILWHLSGTADPDLALNTIIRLMEALGEQKGQLHNALRTDPELRVKLFSLLGASTALGDHLVAHPHTWPELQRPMPTRQEMFRLMLGSVGAARASFSSESQQPQGSDSDSEFSFGADLSADDTANTDLSTPGTYRAEITGERAEVALKTTYRSLLLRIAAADLAGTYPEDIHRTGLPEVPFVTVTKALADLADAALTAALAVAVAHVYPEGEVDTHLAVMAMGKCGAQELNYISDVDVIFVAEPVTPKAIRLAGEFIRIGCACFFEVDAALRPEGKHGVLVRTLDSHVAYYKRWAETWEFQALLKHRPMTGYMPLGQAYSEKLQPMVWEASQRESFVDNVQRMRRRVLENVPAKLKNLELKLGEGGLRDVEFAVQLLQLVHGRSDESLRTLSTIDALNALIEGGYVGREDGAELIRAYEFLRLLEHRLQLQKVKRTHTMPEATKTKQLRWLARAAGFKTSKLASATDEMNAMLKTSRLHISSLHRKLFYRPLLDSVVNISVGTLKLSPAAAKLQLAALGYVFPDRAMDHLHALAAGGSRKAKIQAMLLPTLMEWLSETAEPDAGLLNYRKLSDAAYDRTWFLRMLRDEGVVGQRLMRILGNSPYTADLIISAPDIVKQLGDGATRPKLLETSEDRVTKSIVAAAARHDDPDVAIAVARSLRRAELARIASADLLQMLSVQQVCRRLSYVWDAVLEAGLQAEIRASLIGSTGDKNSVPPARIAVIGMGRLGGSELGYGSDADVMFVCEPTEGVSDEAAVKWAIGVCDSMRSRLAKPSGDPPLDVDLGLRPEGRSGAVVRTLESYKQYYERWGEVWEIQALLRADFIAGDQELGARFLEMIEPLRYPEAGVSQKVIREVRRMKARVDNERLPRGADRNTHTKLGRGALTDVEWTVQLLTMMHAHEFQDLHNPSTLDSLDVIEKHAVIEPEKVEVLRQAWLTATRARNAIVLVRGKRVDQLPQQGTQLAAVAGAAGWEPSDSQQYLDHYLKVTRRARQVVDEVFWGVDSIEHDY.

Residues methionine 1–leucine 535 are adenylyl removase. Polar residues-rich tracts occupy residues serine 138 to aspartate 150 and aspartate 165 to glycine 175. The disordered stretch occupies residues serine 138–glycine 175. Positions asparagine 541–tyrosine 1054 are adenylyl transferase.

It belongs to the GlnE family. Requires Mg(2+) as cofactor.

The catalysed reaction is [glutamine synthetase]-O(4)-(5'-adenylyl)-L-tyrosine + phosphate = [glutamine synthetase]-L-tyrosine + ADP. It catalyses the reaction [glutamine synthetase]-L-tyrosine + ATP = [glutamine synthetase]-O(4)-(5'-adenylyl)-L-tyrosine + diphosphate. Functionally, involved in the regulation of glutamine synthetase GlnA, a key enzyme in the process to assimilate ammonia. When cellular nitrogen levels are high, the C-terminal adenylyl transferase (AT) inactivates GlnA by covalent transfer of an adenylyl group from ATP to specific tyrosine residue of GlnA, thus reducing its activity. Conversely, when nitrogen levels are low, the N-terminal adenylyl removase (AR) activates GlnA by removing the adenylyl group by phosphorolysis, increasing its activity. The regulatory region of GlnE binds the signal transduction protein PII (GlnB) which indicates the nitrogen status of the cell. This chain is Bifunctional glutamine synthetase adenylyltransferase/adenylyl-removing enzyme, found in Corynebacterium diphtheriae (strain ATCC 700971 / NCTC 13129 / Biotype gravis).